Consider the following 648-residue polypeptide: MSPRRSVCWFVLGQLLCSCAVALQGGMLFPKETPSRELKVLDGLWSFRADYSNNRLQGFEKQWYRQPLRESGPTLDMPVPSSFNDITQEAELRNFIGWVWYEREAVLPQRWTQDTDRRVVLRINSAHYYAVVWVNGIHVVEHEGGHLPFEADITKLVQSGPLTTFRVTIAINNTLTPYTLPPGTIVYKTDPSMYPKGYFVQDISFDFFNYAGLHRSVVLYTTPTTYIDDITVTTDVDRDVGLVNYWISVQGSDHFQLEVRLLDEDGKIVARGTGNEGQLKVPRAHLWWPYLMHEHPAYLYSLEVTMTTPESVSDFYTLPVGIRTVAVTKSKFLINGKPFYFQGVNKHEDSDIRGRGFDWPLLIKDFNLLRWLGANSFRTSHYPYSEEVLQLCDRYGIVVIDECPGVGIVLPQSFGNVSLRHHLEVMDELVRRDKNHPAVVMWSVANEPVSSLKPAGYYFKTLIAHTKALDPTRPVTFVSNTRYDADMGAPYVDVICVNSYLSWYHDYGHLEVIQLQLTSQFENWYKMYQKPIIQSEYGADAVSGLHEDPPRMFSEEYQTALLENYHLILDEKRKEYVIGELIWNFADFMTNQSPLRVTGNKKGIFTRQRNPKMAAFILRERYWRIANETRGYGSVPRTQCMGSRPFTF.

The N-terminal stretch at Met1 to Ala22 is a signal peptide. N-linked (GlcNAc...) asparagine glycosylation is found at Asn172 and Asn416. Glu447 (proton donor) is an active-site residue. A glycan (N-linked (GlcNAc...) asparagine) is linked at Asn627.

Belongs to the glycosyl hydrolase 2 family. Homotetramer. Undergoes a post-transcriptional proteolytic cleavage near its C-terminal end, which reduces its size by approximately 3 kDa. The site of this cleavage has as yet not been determined.

The protein localises to the lysosome. It carries out the reaction a beta-D-glucuronoside + H2O = D-glucuronate + an alcohol. Its activity is regulated as follows. Inhibited by L-aspartic acid. Its function is as follows. Plays an important role in the degradation of dermatan and keratan sulfates. This is Beta-glucuronidase (Gusb) from Rattus norvegicus (Rat).